The chain runs to 216 residues: ATP phosphoribosyltransferase (216 aa).

Belongs to the ATP phosphoribosyltransferase family. Short subfamily. As to quaternary structure, heteromultimer composed of HisG and HisZ subunits.

It localises to the cytoplasm. The enzyme catalyses 1-(5-phospho-beta-D-ribosyl)-ATP + diphosphate = 5-phospho-alpha-D-ribose 1-diphosphate + ATP. The protein operates within amino-acid biosynthesis; L-histidine biosynthesis; L-histidine from 5-phospho-alpha-D-ribose 1-diphosphate: step 1/9. Its function is as follows. Catalyzes the condensation of ATP and 5-phosphoribose 1-diphosphate to form N'-(5'-phosphoribosyl)-ATP (PR-ATP). Has a crucial role in the pathway because the rate of histidine biosynthesis seems to be controlled primarily by regulation of HisG enzymatic activity. This is ATP phosphoribosyltransferase from Streptococcus thermophilus (strain ATCC BAA-491 / LMD-9).